The following is a 148-amino-acid chain: Hemoglobin subunit gamma (148 aa).

One can recognise a Globin domain in the interval 3–148 (HFTAEEKAII…VAIAMGHKYH (146 aa)). Heme b contacts are provided by histidine 64 and histidine 93.

This sequence belongs to the globin family. As to quaternary structure, heterotetramer of two alpha chains and two gamma chains in fetal hemoglobin (Hb F). In terms of tissue distribution, red blood cells.

Gamma chains make up the fetal hemoglobin F, in combination with alpha chains. The chain is Hemoglobin subunit gamma (HBG) from Carlito syrichta (Philippine tarsier).